A 394-amino-acid chain; its full sequence is Stabilizer of axonemal microtubules 2 (394 aa).

Mn stretches follow at residues 110–122 (STTFQDDYVPQEI), 144–158 (DTSHRRDYVPHQLEV), 244–256 (NSTSHLDYVPYQA), 278–292 (KSTTKEDFPAWEICR), 312–324 (LSTFRSHFVPHEL), and 346–360 (VTMYSIQFTPKKQEI).

This sequence belongs to the FAM154 family.

This chain is Stabilizer of axonemal microtubules 2 (Saxo2), found in Mus musculus (Mouse).